We begin with the raw amino-acid sequence, 338 residues long: MPQPSRPRKGSLGFGPRKRSTSETPRFNSWPSDDGQPGVQGFAGYKAGMTHVVLVNDEPNSPREGMEETVPVTVIETPPMRAVALRAYEDTPYGQRPLTEVWTDEFHSELDRTLDVPEDHDPDAAEEQIRDAHEAGDLGDLRLITHTVPDAVPSVPKKKPDVMETRVGGGSVSDRLDHALDIVEDGGEHAMNDIFRAGEYADVAGVTKGKGTQGPVKRWGVQKRKGKHARQGWRRRIGNLGPWNPSRVRSTVPQQGQTGYHQRTELNKRLIDIGEGDEPTVDGGFVNYGEVDGPYTLVKGSVPGPDKRLVRFRPAVRPNDQPRLDPEVRYVSNESNQG.

Disordered stretches follow at residues 1 to 44 (MPQP…GFAG), 151 to 170 (AVPSVPKKKPDVMETRVGGG), 206 to 259 (VTKG…GQTG), and 312 to 338 (FRPAVRPNDQPRLDPEVRYVSNESNQG). A compositionally biased stretch (polar residues) spans 22–31 (SETPRFNSWP). A compositionally biased stretch (basic residues) spans 220-237 (GVQKRKGKHARQGWRRRI). Residues 247–259 (RVRSTVPQQGQTG) are compositionally biased toward polar residues.

The protein belongs to the universal ribosomal protein uL3 family. Part of the 50S ribosomal subunit. Forms a cluster with proteins L14 and L24e. Interacts weakly with protein L13.

Its function is as follows. One of the primary rRNA binding proteins, it binds directly near the 3'-end of the 23S rRNA, where it nucleates assembly of the 50S subunit. This Haloarcula marismortui (strain ATCC 43049 / DSM 3752 / JCM 8966 / VKM B-1809) (Halobacterium marismortui) protein is Large ribosomal subunit protein uL3 (rpl3).